The primary structure comprises 222 residues: Adenylate kinase, chloroplastic (222 aa).

15 to 20 serves as a coordination point for ATP; it reads ASGKGT. Residues 35–64 are NMP; it reads SAGDLLRAEIAAGSENGKRAKEFMEKGQLV. Residues Arg41, 62-64, 91-94, and Gln98 contribute to the AMP site; these read QLV and GYPR. The segment at 128-161 is LID; the sequence is GRRLDPVTGKIYHLKYSPPENEEIASRLTQRFDD. Arg129 lines the ATP pocket. Residue Arg158 coordinates AMP. Ala195 contributes to the ATP binding site.

In terms of assembly, monomer.

The protein resides in the plastid. It is found in the chloroplast. It catalyses the reaction AMP + ATP = 2 ADP. In terms of biological role, catalyzes the reversible transfer of the terminal phosphate group between ATP and AMP. Plays an important role in cellular energy homeostasis and in adenine nucleotide metabolism. The maize enzyme also works with CMP, albeit with 10% of the activity with AMP. The sequence is that of Adenylate kinase, chloroplastic (ADK1) from Zea mays (Maize).